Reading from the N-terminus, the 125-residue chain is Lectin (125 aa).

Residues 1–120 (MDYEILFSDE…CGGARRVICE (120 aa)) enclose the C-type lectin domain. 2 disulfides stabilise this stretch: C21/C119 and C96/C111.

In terms of assembly, homodimer.

Functionally, role in the defense system of the organism against microorganisms. This calcium-binding lectin binds galactose. In Polyandrocarpa misakiensis (Tunicate), this protein is Lectin.